A 113-amino-acid chain; its full sequence is Protein SPIRAL1-like 1 (113 aa).

Residues 1–12 are compositionally biased toward gly residues; the sequence is MGRGVSVGGGQS. The segment at 1–50 is disordered; sequence MGRGVSVGGGQSSLGYLFGSGEAPKPAINNAPAPSSETLPISADPSPKHV. The segment covering 23–34 has biased composition (low complexity); sequence APKPAINNAPAP. Ser69 bears the Phosphoserine mark. The disordered stretch occupies residues 79–113; that stretch reads QNTGNFLTDRPSTKVHAAPGGGSSLDYLFGGGGSN. Gly residues predominate over residues 97-113; the sequence is PGGGSSLDYLFGGGGSN.

It belongs to the SPIRAL1 family. Detected in pollen of mature flowers.

In terms of biological role, acts redundantly with SPR1 in maintaining the cortical microtubules organization essential for anisotropic cell growth. The sequence is that of Protein SPIRAL1-like 1 (SP1L1) from Arabidopsis thaliana (Mouse-ear cress).